The sequence spans 115 residues: Cytochrome c (115 aa).

Heme c is bound by residues Cys-26, Cys-29, His-30, and Met-91.

Belongs to the cytochrome c family. In terms of processing, binds 1 heme c group covalently per subunit.

It is found in the mitochondrion intermembrane space. Electron carrier protein. The oxidized form of the cytochrome c heme group can accept an electron from the heme group of the cytochrome c1 subunit of cytochrome reductase. Cytochrome c then transfers this electron to the cytochrome oxidase complex, the final protein carrier in the mitochondrial electron-transport chain. The sequence is that of Cytochrome c from Theileria annulata.